The sequence spans 282 residues: Bifunctional protein FolD (282 aa).

Residues 160–162 (NRS), Ser-185, and Ile-228 each bind NADP(+).

Belongs to the tetrahydrofolate dehydrogenase/cyclohydrolase family. As to quaternary structure, homodimer.

It catalyses the reaction (6R)-5,10-methylene-5,6,7,8-tetrahydrofolate + NADP(+) = (6R)-5,10-methenyltetrahydrofolate + NADPH. The catalysed reaction is (6R)-5,10-methenyltetrahydrofolate + H2O = (6R)-10-formyltetrahydrofolate + H(+). Its pathway is one-carbon metabolism; tetrahydrofolate interconversion. Its function is as follows. Catalyzes the oxidation of 5,10-methylenetetrahydrofolate to 5,10-methenyltetrahydrofolate and then the hydrolysis of 5,10-methenyltetrahydrofolate to 10-formyltetrahydrofolate. This Cenarchaeum symbiosum (strain A) protein is Bifunctional protein FolD.